Consider the following 604-residue polypeptide: Aspartate--tRNA(Asp/Asn) ligase (604 aa).

Glu175 contacts L-aspartate. The tract at residues Gln199 to Lys202 is aspartate. Residues Arg221 and His451 each coordinate L-aspartate. Position 221-223 (Arg221–Glu223) interacts with ATP. Glu485 serves as a coordination point for ATP. Arg492 contributes to the L-aspartate binding site. Residue Gly537–Arg540 coordinates ATP.

This sequence belongs to the class-II aminoacyl-tRNA synthetase family. Type 1 subfamily. As to quaternary structure, homodimer.

It localises to the cytoplasm. It catalyses the reaction tRNA(Asx) + L-aspartate + ATP = L-aspartyl-tRNA(Asx) + AMP + diphosphate. Functionally, aspartyl-tRNA synthetase with relaxed tRNA specificity since it is able to aspartylate not only its cognate tRNA(Asp) but also tRNA(Asn). Reaction proceeds in two steps: L-aspartate is first activated by ATP to form Asp-AMP and then transferred to the acceptor end of tRNA(Asp/Asn). The chain is Aspartate--tRNA(Asp/Asn) ligase from Erythrobacter litoralis (strain HTCC2594).